An 895-amino-acid chain; its full sequence is Protein translocase subunit SecA (895 aa).

Residues Q89, 107 to 111 (GEGKT), and D502 contribute to the ATP site. Disordered stretches follow at residues 560-579 (RRID…PGRT) and 848-884 (AAPA…CGSG). Zn(2+)-binding residues include C879, C881, C890, and H891.

The protein belongs to the SecA family. Monomer and homodimer. Part of the essential Sec protein translocation apparatus which comprises SecA, SecYEG and auxiliary proteins SecDF-YajC and YidC. Zn(2+) is required as a cofactor.

It is found in the cell inner membrane. Its subcellular location is the cytoplasm. It catalyses the reaction ATP + H2O + cellular proteinSide 1 = ADP + phosphate + cellular proteinSide 2.. Its function is as follows. Part of the Sec protein translocase complex. Interacts with the SecYEG preprotein conducting channel. Has a central role in coupling the hydrolysis of ATP to the transfer of proteins into and across the cell membrane, serving both as a receptor for the preprotein-SecB complex and as an ATP-driven molecular motor driving the stepwise translocation of polypeptide chains across the membrane. The protein is Protein translocase subunit SecA of Ruegeria sp. (strain TM1040) (Silicibacter sp.).